The following is a 491-amino-acid chain: G2/mitotic-specific cyclin-2 (491 aa).

An N-acetylserine modification is found at Ser-2. Disordered regions lie at residues 59–107 and 164–184; these read EGSR…DPSS and HPAR…SGKK. A compositionally biased stretch (polar residues) spans 67-77; that stretch reads TRESVSRSTAA.

Belongs to the cyclin family. Cyclin AB subfamily. Interacts with NAP1.

Essential for the control of the cell cycle at the G2/M (mitosis) transition. Interacts with the CDC2 protein kinase to form MPF. G2/M cyclins accumulate steadily during G2 and are abruptly destroyed at mitosis. The chain is G2/mitotic-specific cyclin-2 (CLB2) from Saccharomyces cerevisiae (strain ATCC 204508 / S288c) (Baker's yeast).